The following is a 430-amino-acid chain: Glutamate-1-semialdehyde 2,1-aminomutase (430 aa).

K267 carries the post-translational modification N6-(pyridoxal phosphate)lysine.

Belongs to the class-III pyridoxal-phosphate-dependent aminotransferase family. HemL subfamily. As to quaternary structure, homodimer. Pyridoxal 5'-phosphate serves as cofactor.

It is found in the cytoplasm. It catalyses the reaction (S)-4-amino-5-oxopentanoate = 5-aminolevulinate. It functions in the pathway porphyrin-containing compound metabolism; protoporphyrin-IX biosynthesis; 5-aminolevulinate from L-glutamyl-tRNA(Glu): step 2/2. This chain is Glutamate-1-semialdehyde 2,1-aminomutase, found in Cytophaga hutchinsonii (strain ATCC 33406 / DSM 1761 / CIP 103989 / NBRC 15051 / NCIMB 9469 / D465).